The following is a 559-amino-acid chain: Phosphoinositide 3-phosphatase (559 aa).

The Myotubularin phosphatase domain occupies 120–541 (SWKSFLLENE…SSLRWWSASF (422 aa)). The Phosphocysteine intermediate role is filled by C342.

The protein belongs to the protein-tyrosine phosphatase family. Non-receptor class myotubularin subfamily.

Its subcellular location is the cytoplasm. The catalysed reaction is a 1,2-diacyl-sn-glycero-3-phospho-(1D-myo-inositol-3-phosphate) + H2O = a 1,2-diacyl-sn-glycero-3-phospho-(1D-myo-inositol) + phosphate. Functionally, lipid phosphatase which dephosphorylates phosphatidylinositol 3-monophosphate (PI3P). Involved in the control of PI3P-dependent signaling and in the maintenance of endosomal system integrity. The polypeptide is Phosphoinositide 3-phosphatase (Schizosaccharomyces pombe (strain 972 / ATCC 24843) (Fission yeast)).